A 156-amino-acid chain; its full sequence is ATP synthase subunit b (156 aa).

A helical transmembrane segment spans residues 7–27 (FFAQMVVFFILWWVVAKFIWP).

It belongs to the ATPase B chain family. F-type ATPases have 2 components, F(1) - the catalytic core - and F(0) - the membrane proton channel. F(1) has five subunits: alpha(3), beta(3), gamma(1), delta(1), epsilon(1). F(0) has three main subunits: a(1), b(2) and c(10-14). The alpha and beta chains form an alternating ring which encloses part of the gamma chain. F(1) is attached to F(0) by a central stalk formed by the gamma and epsilon chains, while a peripheral stalk is formed by the delta and b chains.

It localises to the cell inner membrane. In terms of biological role, f(1)F(0) ATP synthase produces ATP from ADP in the presence of a proton or sodium gradient. F-type ATPases consist of two structural domains, F(1) containing the extramembraneous catalytic core and F(0) containing the membrane proton channel, linked together by a central stalk and a peripheral stalk. During catalysis, ATP synthesis in the catalytic domain of F(1) is coupled via a rotary mechanism of the central stalk subunits to proton translocation. Component of the F(0) channel, it forms part of the peripheral stalk, linking F(1) to F(0). The polypeptide is ATP synthase subunit b (Cupriavidus metallidurans (strain ATCC 43123 / DSM 2839 / NBRC 102507 / CH34) (Ralstonia metallidurans)).